The following is a 150-amino-acid chain: MGKSILLINGPNLNLLGTREPHIYGNTTLADVEASCKAHAESLGATLATFQSNHEGAIIDRIQAARGNVDGIIINPGAFTHTSVAIRDALLGVGIPFIELHVSNVHAREPWRHHSYFSDKAAGIIVGLGVYGYKVAVEHVALNFKERAAL.

Tyr24 functions as the Proton acceptor in the catalytic mechanism. The substrate site is built by Asn75, His81, and Asp88. His101 (proton donor) is an active-site residue. Residues 102–103 and Arg112 contribute to the substrate site; that span reads VS.

Belongs to the type-II 3-dehydroquinase family. Homododecamer. Adopts a ring-like structure, composed of an arrangement of two hexameric rings stacked on top of one another.

The enzyme catalyses 3-dehydroquinate = 3-dehydroshikimate + H2O. The protein operates within aromatic compound metabolism; 3,4-dihydroxybenzoate biosynthesis; 3,4-dihydroxybenzoate from 3-dehydroquinate: step 1/2. Functionally, is involved in the catabolism of quinate. Allows the utilization of quinate as carbon source via the beta-ketoadipate pathway. This chain is Catabolic 3-dehydroquinase 1, found in Aspergillus fumigatus (strain ATCC MYA-4609 / CBS 101355 / FGSC A1100 / Af293) (Neosartorya fumigata).